A 245-amino-acid chain; its full sequence is Probable phosphatase KPK_3500 (245 aa).

Residues His-7, His-9, His-15, His-40, Glu-73, His-101, His-131, Asp-192, and His-194 each coordinate Zn(2+).

This sequence belongs to the PHP family. Homotrimer. The cofactor is Zn(2+).

This chain is Probable phosphatase KPK_3500, found in Klebsiella pneumoniae (strain 342).